A 507-amino-acid polypeptide reads, in one-letter code: Beta-glucosidase 13 (507 aa).

The first 22 residues, 1–22, serve as a signal peptide directing secretion; the sequence is MRTKYFSLLVFIIVLASNEVIA. An a beta-D-glucoside-binding site is contributed by Gln50. N-linked (GlcNAc...) asparagine glycosylation occurs at Asn81. Residues His154 and 199 to 200 each bind a beta-D-glucoside; that span reads NE. Glu200 (proton donor) is an active-site residue. An intrachain disulfide couples Cys219 to Cys227. Residue Asn226 is glycosylated (N-linked (GlcNAc...) asparagine). Residue Tyr344 participates in a beta-D-glucoside binding. Asn358 carries an N-linked (GlcNAc...) asparagine glycan. A beta-D-glucoside-binding positions include Glu414, Trp459, 466-467, and Phe475; that span reads EW. Catalysis depends on Glu414, which acts as the Nucleophile.

It belongs to the glycosyl hydrolase 1 family.

The enzyme catalyses Hydrolysis of terminal, non-reducing beta-D-glucosyl residues with release of beta-D-glucose.. The chain is Beta-glucosidase 13 from Arabidopsis thaliana (Mouse-ear cress).